The following is a 261-amino-acid chain: Proteasome subunit alpha type-4 (261 aa).

A phosphoserine mark is found at Ser13 and Ser75. Position 127 is an N6-acetyllysine (Lys127). Ser173 is modified (phosphoserine). Lys176 is subject to N6-acetyllysine. A disordered region spans residues 240-261 (HEEEEAKAEREKKEKEQKEKDK).

It belongs to the peptidase T1A family. The 26S proteasome consists of a 20S proteasome core and two 19S regulatory subunits. The 20S proteasome core is a barrel-shaped complex made of 28 subunits that are arranged in four stacked rings. The two outer rings are each formed by seven alpha subunits, and the two inner rings are formed by seven beta subunits. The proteolytic activity is exerted by three beta-subunits PSMB5, PSMB6 and PSMB7.

The protein resides in the cytoplasm. Its subcellular location is the nucleus. Component of the 20S core proteasome complex involved in the proteolytic degradation of most intracellular proteins. This complex plays numerous essential roles within the cell by associating with different regulatory particles. Associated with two 19S regulatory particles, forms the 26S proteasome and thus participates in the ATP-dependent degradation of ubiquitinated proteins. The 26S proteasome plays a key role in the maintenance of protein homeostasis by removing misfolded or damaged proteins that could impair cellular functions, and by removing proteins whose functions are no longer required. Associated with the PA200 or PA28, the 20S proteasome mediates ubiquitin-independent protein degradation. This type of proteolysis is required in several pathways including spermatogenesis (20S-PA200 complex) or generation of a subset of MHC class I-presented antigenic peptides (20S-PA28 complex). The protein is Proteasome subunit alpha type-4 (PSMA4) of Bos taurus (Bovine).